Here is a 164-residue protein sequence, read N- to C-terminus: 3-hydroxyacyl-[acyl-carrier-protein] dehydratase FabZ (164 aa).

The active site involves His70.

It belongs to the thioester dehydratase family. FabZ subfamily.

It localises to the cytoplasm. The catalysed reaction is a (3R)-hydroxyacyl-[ACP] = a (2E)-enoyl-[ACP] + H2O. Functionally, involved in unsaturated fatty acids biosynthesis. Catalyzes the dehydration of short chain beta-hydroxyacyl-ACPs and long chain saturated and unsaturated beta-hydroxyacyl-ACPs. The polypeptide is 3-hydroxyacyl-[acyl-carrier-protein] dehydratase FabZ (Synechocystis sp. (strain ATCC 27184 / PCC 6803 / Kazusa)).